The sequence spans 308 residues: tRNA dimethylallyltransferase 1 (308 aa).

Residue G9 to T16 participates in ATP binding. Residue T11 to T16 participates in substrate binding. The tract at residues D34–Q37 is interaction with substrate tRNA.

It belongs to the IPP transferase family. As to quaternary structure, monomer. It depends on Mg(2+) as a cofactor.

The enzyme catalyses adenosine(37) in tRNA + dimethylallyl diphosphate = N(6)-dimethylallyladenosine(37) in tRNA + diphosphate. Functionally, catalyzes the transfer of a dimethylallyl group onto the adenine at position 37 in tRNAs that read codons beginning with uridine, leading to the formation of N6-(dimethylallyl)adenosine (i(6)A). This is tRNA dimethylallyltransferase 1 from Bacteroides thetaiotaomicron (strain ATCC 29148 / DSM 2079 / JCM 5827 / CCUG 10774 / NCTC 10582 / VPI-5482 / E50).